The chain runs to 273 residues: 2,3,4,5-tetrahydropyridine-2,6-dicarboxylate N-succinyltransferase (273 aa).

Substrate-binding residues include Arg104 and Asp141.

It belongs to the transferase hexapeptide repeat family. As to quaternary structure, homotrimer.

The protein resides in the cytoplasm. It catalyses the reaction (S)-2,3,4,5-tetrahydrodipicolinate + succinyl-CoA + H2O = (S)-2-succinylamino-6-oxoheptanedioate + CoA. It participates in amino-acid biosynthesis; L-lysine biosynthesis via DAP pathway; LL-2,6-diaminopimelate from (S)-tetrahydrodipicolinate (succinylase route): step 1/3. The polypeptide is 2,3,4,5-tetrahydropyridine-2,6-dicarboxylate N-succinyltransferase (Chromobacterium violaceum (strain ATCC 12472 / DSM 30191 / JCM 1249 / CCUG 213 / NBRC 12614 / NCIMB 9131 / NCTC 9757 / MK)).